We begin with the raw amino-acid sequence, 156 residues long: Ribosomal RNA large subunit methyltransferase H (156 aa).

Residues leucine 73, glycine 104, and 123–128 (LSPLTL) each bind S-adenosyl-L-methionine.

It belongs to the RNA methyltransferase RlmH family. As to quaternary structure, homodimer.

The protein resides in the cytoplasm. The enzyme catalyses pseudouridine(1915) in 23S rRNA + S-adenosyl-L-methionine = N(3)-methylpseudouridine(1915) in 23S rRNA + S-adenosyl-L-homocysteine + H(+). Specifically methylates the pseudouridine at position 1915 (m3Psi1915) in 23S rRNA. In Pectobacterium carotovorum subsp. carotovorum (strain PC1), this protein is Ribosomal RNA large subunit methyltransferase H.